A 169-amino-acid polypeptide reads, in one-letter code: Lipoprotein signal peptidase (169 aa).

2 helical membrane passes run 59–79 (PTVL…YVIW) and 84–104 (TTLF…NMID). Residues Asp-113 and Asp-139 contribute to the active site. A helical membrane pass occupies residues 132 to 152 (WPIFNIADSAITIGACMLMIF).

It belongs to the peptidase A8 family.

It is found in the cell inner membrane. The catalysed reaction is Release of signal peptides from bacterial membrane prolipoproteins. Hydrolyzes -Xaa-Yaa-Zaa-|-(S,diacylglyceryl)Cys-, in which Xaa is hydrophobic (preferably Leu), and Yaa (Ala or Ser) and Zaa (Gly or Ala) have small, neutral side chains.. The protein operates within protein modification; lipoprotein biosynthesis (signal peptide cleavage). This protein specifically catalyzes the removal of signal peptides from prolipoproteins. The polypeptide is Lipoprotein signal peptidase (Pelodictyon phaeoclathratiforme (strain DSM 5477 / BU-1)).